A 259-amino-acid chain; its full sequence is tRNA pseudouridine synthase A (259 aa).

Asp-52 (nucleophile) is an active-site residue. A substrate-binding site is contributed by Tyr-110.

It belongs to the tRNA pseudouridine synthase TruA family. Homodimer.

It carries out the reaction uridine(38/39/40) in tRNA = pseudouridine(38/39/40) in tRNA. Functionally, formation of pseudouridine at positions 38, 39 and 40 in the anticodon stem and loop of transfer RNAs. This Coprothermobacter proteolyticus (strain ATCC 35245 / DSM 5265 / OCM 4 / BT) protein is tRNA pseudouridine synthase A.